The sequence spans 459 residues: Putrescine aminotransferase (459 aa).

Pyridoxal 5'-phosphate contacts are provided by residues glycine 150–threonine 151 and glutamine 274. Lysine 300 carries the N6-(pyridoxal phosphate)lysine modification. Residue threonine 332 coordinates pyridoxal 5'-phosphate.

This sequence belongs to the class-III pyridoxal-phosphate-dependent aminotransferase family. Putrescine aminotransferase subfamily. It depends on pyridoxal 5'-phosphate as a cofactor.

The enzyme catalyses an alkane-alpha,omega-diamine + 2-oxoglutarate = an omega-aminoaldehyde + L-glutamate. It carries out the reaction putrescine + 2-oxoglutarate = 1-pyrroline + L-glutamate + H2O. The catalysed reaction is cadaverine + 2-oxoglutarate = 5-aminopentanal + L-glutamate. It functions in the pathway amine and polyamine degradation; putrescine degradation; 4-aminobutanal from putrescine (transaminase route): step 1/1. In terms of biological role, catalyzes the aminotransferase reaction from putrescine to 2-oxoglutarate, leading to glutamate and 4-aminobutanal, which spontaneously cyclizes to form 1-pyrroline. This is the first step in one of two pathways for putrescine degradation, where putrescine is converted into 4-aminobutanoate (gamma-aminobutyrate or GABA) via 4-aminobutanal. Also functions as a cadaverine transaminase in a a L-lysine degradation pathway to succinate that proceeds via cadaverine, glutarate and L-2-hydroxyglutarate. In Enterobacter sp. (strain 638), this protein is Putrescine aminotransferase.